We begin with the raw amino-acid sequence, 157 residues long: uncharacterized protein (157 aa).

Transmembrane regions (helical) follow at residues 29 to 49, 52 to 72, 93 to 113, and 117 to 137; these read LLII…PAYF, VLHV…GFGI, LGSV…RTWL, and NEMF…TITA.

It localises to the cell membrane. This is an uncharacterized protein from Bacillus subtilis (strain 168).